Consider the following 253-residue polypeptide: Leucyl/phenylalanyl-tRNA--protein transferase (253 aa).

Belongs to the L/F-transferase family.

It localises to the cytoplasm. It catalyses the reaction N-terminal L-lysyl-[protein] + L-leucyl-tRNA(Leu) = N-terminal L-leucyl-L-lysyl-[protein] + tRNA(Leu) + H(+). The catalysed reaction is N-terminal L-arginyl-[protein] + L-leucyl-tRNA(Leu) = N-terminal L-leucyl-L-arginyl-[protein] + tRNA(Leu) + H(+). The enzyme catalyses L-phenylalanyl-tRNA(Phe) + an N-terminal L-alpha-aminoacyl-[protein] = an N-terminal L-phenylalanyl-L-alpha-aminoacyl-[protein] + tRNA(Phe). Its function is as follows. Functions in the N-end rule pathway of protein degradation where it conjugates Leu, Phe and, less efficiently, Met from aminoacyl-tRNAs to the N-termini of proteins containing an N-terminal arginine or lysine. This Bordetella petrii (strain ATCC BAA-461 / DSM 12804 / CCUG 43448) protein is Leucyl/phenylalanyl-tRNA--protein transferase.